Here is a 410-residue protein sequence, read N- to C-terminus: Translation initiation factor 2 subunit gamma (410 aa).

Residues 9–202 (QAEVNIGMVG…AIEEFIPTPK (194 aa)) enclose the tr-type G domain. Positions 18 to 25 (GHVDHGKT) are G1. Mg(2+)-binding residues include D21, T25, G46, and T48. Position 21-26 (21-26 (DHGKTT)) interacts with GTP. Residues 46–50 (GITIK) form a G2 region. Residues C61, C64, C73, and C76 each coordinate Zn(2+). Positions 90-93 (DAPG) are G3. GTP-binding positions include 145–148 (NKIE) and 180–182 (SAL). A G4 region spans residues 145-148 (NKIE). The segment at 180–182 (SAL) is G5.

Belongs to the TRAFAC class translation factor GTPase superfamily. Classic translation factor GTPase family. EIF2G subfamily. Heterotrimer composed of an alpha, a beta and a gamma chain. Requires Mg(2+) as cofactor.

The enzyme catalyses GTP + H2O = GDP + phosphate + H(+). Its function is as follows. eIF-2 functions in the early steps of protein synthesis by forming a ternary complex with GTP and initiator tRNA. This Thermococcus kodakarensis (strain ATCC BAA-918 / JCM 12380 / KOD1) (Pyrococcus kodakaraensis (strain KOD1)) protein is Translation initiation factor 2 subunit gamma.